Reading from the N-terminus, the 109-residue chain is Cell division protein FtsL (109 aa).

Residues 1-3 (MSR) lie on the Cytoplasmic side of the membrane. A helical transmembrane segment spans residues 4–21 (LNIFLLIIVMGCALSVVN). Over 22–109 (STNQQRQIFI…ASAAPTGGAR (88 aa)) the chain is Periplasmic.

It belongs to the FtsL family. As to quaternary structure, part of a complex composed of FtsB, FtsL and FtsQ.

The protein localises to the cell inner membrane. In terms of biological role, essential cell division protein. May link together the upstream cell division proteins, which are predominantly cytoplasmic, with the downstream cell division proteins, which are predominantly periplasmic. In Burkholderia pseudomallei (strain K96243), this protein is Cell division protein FtsL.